Here is a 211-residue protein sequence, read N- to C-terminus: Pyridoxine/pyridoxamine 5'-phosphate oxidase (211 aa).

Residues 8 to 11 and lysine 66 contribute to the substrate site; that span reads RNEY. FMN contacts are provided by residues 61–66, 76–77, lysine 83, and glutamine 105; these read RVVLLK and FT. Substrate-binding residues include tyrosine 123, arginine 127, and serine 131. Residues 140–141 and tryptophan 184 contribute to the FMN site; that span reads QS. Substrate is bound at residue 190–192; it reads RLH. Arginine 194 provides a ligand contact to FMN.

The protein belongs to the pyridoxamine 5'-phosphate oxidase family. As to quaternary structure, homodimer. The cofactor is FMN.

The enzyme catalyses pyridoxamine 5'-phosphate + O2 + H2O = pyridoxal 5'-phosphate + H2O2 + NH4(+). The catalysed reaction is pyridoxine 5'-phosphate + O2 = pyridoxal 5'-phosphate + H2O2. The protein operates within cofactor metabolism; pyridoxal 5'-phosphate salvage; pyridoxal 5'-phosphate from pyridoxamine 5'-phosphate: step 1/1. Its pathway is cofactor metabolism; pyridoxal 5'-phosphate salvage; pyridoxal 5'-phosphate from pyridoxine 5'-phosphate: step 1/1. Functionally, catalyzes the oxidation of either pyridoxine 5'-phosphate (PNP) or pyridoxamine 5'-phosphate (PMP) into pyridoxal 5'-phosphate (PLP). In Mannheimia succiniciproducens (strain KCTC 0769BP / MBEL55E), this protein is Pyridoxine/pyridoxamine 5'-phosphate oxidase.